A 275-amino-acid polypeptide reads, in one-letter code: Shikimate dehydrogenase (NADP(+)) (275 aa).

Residues Ser15–Ser17 and Thr62 contribute to the shikimate site. Catalysis depends on Lys66, which acts as the Proton acceptor. Glu78 provides a ligand contact to NADP(+). The shikimate site is built by Asn87 and Asp102. NADP(+) is bound by residues Gly127 to Ala131, Asn151 to Lys156, and Met215. Tyr217 is a shikimate binding site. Gly239 is a binding site for NADP(+).

Belongs to the shikimate dehydrogenase family. As to quaternary structure, homodimer.

The enzyme catalyses shikimate + NADP(+) = 3-dehydroshikimate + NADPH + H(+). It functions in the pathway metabolic intermediate biosynthesis; chorismate biosynthesis; chorismate from D-erythrose 4-phosphate and phosphoenolpyruvate: step 4/7. In terms of biological role, involved in the biosynthesis of the chorismate, which leads to the biosynthesis of aromatic amino acids. Catalyzes the reversible NADPH linked reduction of 3-dehydroshikimate (DHSA) to yield shikimate (SA). The protein is Shikimate dehydrogenase (NADP(+)) of Nitrosospira multiformis (strain ATCC 25196 / NCIMB 11849 / C 71).